The primary structure comprises 457 residues: Heme sensor protein HssS (457 aa).

The next 2 membrane-spanning stretches (helical) occupy residues 9–29 (IAIY…VLTN) and 164–184 (TFLA…VIAS). The region spanning 186–238 (YSIIRPVKKLKLATERLIDGDFETPIKQTRKDEIGTLQYHFNKMRESLGQVDQ) is the HAMP domain. Positions 246 to 456 (NVSHEIKTPL…TFTITLPNNS (211 aa)) constitute a Histidine kinase domain. Position 249 is a phosphohistidine; by autocatalysis (His249).

Post-translationally, autophosphorylated.

The protein localises to the cell membrane. The catalysed reaction is ATP + protein L-histidine = ADP + protein N-phospho-L-histidine.. Its function is as follows. Member of the two-component regulatory system HssS/HssR involved in intracellular heme homeostasis and tempering of staphylococcal virulence. HssS functions as a heme sensor histidine kinase which is autophosphorylated at a histidine residue and transfers its phosphate group to an aspartate residue of HssR. HssR/HssS activates the expression of hrtAB, an efflux pump, in response to extracellular heme, hemin, hemoglobin or blood. In Staphylococcus aureus (strain MSSA476), this protein is Heme sensor protein HssS (hssS).